The primary structure comprises 439 residues: AT-hook motif nuclear-localized protein 13 (439 aa).

Disordered stretches follow at residues 1–46, 69–216, and 342–439; these read MDSR…NSYN, QRLP…LGGT, and GRKQ…NSPQ. 2 stretches are compositionally biased toward low complexity: residues 9–31 and 79–95; these read QQQQ…QQQQ and PHQP…PQQQ. Residues 109–120 show a composition bias toward polar residues; sequence SPSSVAATQQHS. The segment covering 130–139 has biased composition (basic residues); it reads VKKKRGRPRK. A Bipartite nuclear localization signal motif is present at residues 131–139; sequence KKKRGRPRK. Positions 131-143 form a DNA-binding region, a.T hook 1; sequence KKKRGRPRKYAAD. Composition is skewed to gly residues over residues 143–152 and 171–183; these read DGGGGGGGGS and YGGG…GGDS. Positions 196-208 form a DNA-binding region, a.T hook 2; it reads KRNRGRPPGSGKK. Residues 217–359 form the PPC domain; that stretch reads GGVGFTPHVI…GRAQNTPEPA (143 aa). Residues 347-357 are compositionally biased toward polar residues; the sequence is QSAGRAQNTPE. Composition is skewed to low complexity over residues 376–386 and 403–416; these read SPRSQGQQHSS and NNNN…FGNS. A compositionally biased stretch (polar residues) spans 428 to 439; that stretch reads MYQNLWPGNSPQ.

The protein resides in the nucleus. Its function is as follows. Transcription factor that specifically binds AT-rich DNA sequences related to the nuclear matrix attachment regions (MARs). In Arabidopsis thaliana (Mouse-ear cress), this protein is AT-hook motif nuclear-localized protein 13.